The following is a 264-amino-acid chain: Small ribosomal subunit protein uS2 (264 aa).

Belongs to the universal ribosomal protein uS2 family.

The chain is Small ribosomal subunit protein uS2 from Helicobacter pylori (strain P12).